The primary structure comprises 183 residues: Translation initiation factor IF-3 (183 aa).

The protein belongs to the IF-3 family. As to quaternary structure, monomer.

Its subcellular location is the cytoplasm. Functionally, IF-3 binds to the 30S ribosomal subunit and shifts the equilibrium between 70S ribosomes and their 50S and 30S subunits in favor of the free subunits, thus enhancing the availability of 30S subunits on which protein synthesis initiation begins. The polypeptide is Translation initiation factor IF-3 (Pseudomonas fluorescens (strain SBW25)).